The primary structure comprises 281 residues: Ribosomal RNA small subunit methyltransferase A (281 aa).

6 residues coordinate S-adenosyl-L-methionine: asparagine 36, leucine 38, glycine 63, glutamate 84, aspartate 109, and asparagine 127.

This sequence belongs to the class I-like SAM-binding methyltransferase superfamily. rRNA adenine N(6)-methyltransferase family. RsmA subfamily.

It is found in the cytoplasm. The enzyme catalyses adenosine(1518)/adenosine(1519) in 16S rRNA + 4 S-adenosyl-L-methionine = N(6)-dimethyladenosine(1518)/N(6)-dimethyladenosine(1519) in 16S rRNA + 4 S-adenosyl-L-homocysteine + 4 H(+). Functionally, specifically dimethylates two adjacent adenosines (A1518 and A1519) in the loop of a conserved hairpin near the 3'-end of 16S rRNA in the 30S particle. May play a critical role in biogenesis of 30S subunits. In Borreliella afzelii (strain PKo) (Borrelia afzelii), this protein is Ribosomal RNA small subunit methyltransferase A.